Here is an 812-residue protein sequence, read N- to C-terminus: Outer membrane usher protein FaeD (812 aa).

Positions 1–35 are cleaved as a signal peptide; sequence MKKYVTTKSVQPVAFRLTTLSLVMSAVLGSASVIA. A disulfide bridge links cysteine 793 with cysteine 811.

It belongs to the fimbrial export usher family.

The protein resides in the cell outer membrane. Functionally, involved in the export and assembly of K88ab fimbrial subunits across the outer membrane. This chain is Outer membrane usher protein FaeD (faeD), found in Escherichia coli.